A 126-amino-acid chain; its full sequence is Fluoride-specific ion channel FluC (126 aa).

The next 4 membrane-spanning stretches (helical) occupy residues P3 to L23, Y36 to F56, L68 to A88, and W99 to L119. Positions 76 and 79 each coordinate Na(+).

The protein belongs to the fluoride channel Fluc/FEX (TC 1.A.43) family.

Its subcellular location is the cell inner membrane. It carries out the reaction fluoride(in) = fluoride(out). Na(+) is not transported, but it plays an essential structural role and its presence is essential for fluoride channel function. Its function is as follows. Fluoride-specific ion channel. Important for reducing fluoride concentration in the cell, thus reducing its toxicity. The sequence is that of Fluoride-specific ion channel FluC from Cupriavidus pinatubonensis (strain JMP 134 / LMG 1197) (Cupriavidus necator (strain JMP 134)).